The chain runs to 142 residues: Putative transcriptional regulatory protein Mevan_1098 (142 aa).

Belongs to the Tfx family.

Putative transcriptional regulator. This chain is Putative transcriptional regulatory protein Mevan_1098, found in Methanococcus vannielii (strain ATCC 35089 / DSM 1224 / JCM 13029 / OCM 148 / SB).